A 35-amino-acid polypeptide reads, in one-letter code: Cupiennin-2a (35 aa).

Lysine 35 bears the Lysine amide mark.

In terms of tissue distribution, expressed by the venom gland.

Its subcellular location is the secreted. The chain is Cupiennin-2a from Cupiennius salei (American wandering spider).